We begin with the raw amino-acid sequence, 61 residues long: Conotoxin Am14.1 (61 aa).

2 consecutive propeptides follow at residues 1–19 (MLSVQLITPSSHGTAHLPR) and 52–61 (KRDLDLFTDQ).

In terms of processing, mostly non-hydroxylated. Contains 2 disulfide bonds. In terms of tissue distribution, expressed by the venom duct.

The protein resides in the secreted. Functionally, probable toxin that inhibits ion channels. The protein is Conotoxin Am14.1 of Conus amadis (Amadis cone).